The sequence spans 349 residues: Phosphoribosylformylglycinamidine cyclo-ligase (349 aa).

The protein belongs to the AIR synthase family.

The protein localises to the cytoplasm. It catalyses the reaction 2-formamido-N(1)-(5-O-phospho-beta-D-ribosyl)acetamidine + ATP = 5-amino-1-(5-phospho-beta-D-ribosyl)imidazole + ADP + phosphate + H(+). The protein operates within purine metabolism; IMP biosynthesis via de novo pathway; 5-amino-1-(5-phospho-D-ribosyl)imidazole from N(2)-formyl-N(1)-(5-phospho-D-ribosyl)glycinamide: step 2/2. The polypeptide is Phosphoribosylformylglycinamidine cyclo-ligase (Methanococcus maripaludis (strain C6 / ATCC BAA-1332)).